A 128-amino-acid polypeptide reads, in one-letter code: Large-conductance mechanosensitive channel (128 aa).

2 consecutive transmembrane segments (helical) span residues 10–30 (FAMRGNVVDMAVGVIIGGAFG) and 76–96 (GMFIQNVFDFIIIAFAIFLMI).

It belongs to the MscL family. Homopentamer.

The protein resides in the cell inner membrane. Its function is as follows. Channel that opens in response to stretch forces in the membrane lipid bilayer. May participate in the regulation of osmotic pressure changes within the cell. The chain is Large-conductance mechanosensitive channel from Actinobacillus succinogenes (strain ATCC 55618 / DSM 22257 / CCUG 43843 / 130Z).